A 475-amino-acid polypeptide reads, in one-letter code: Ankyrin repeat, SAM and basic leucine zipper domain-containing protein 1 (475 aa).

Positions 1–25 are disordered; the sequence is MAASALRGLPVAGGGESSESEDDGW. Phosphoserine occurs at positions 17, 18, and 20. 6 ANK repeats span residues 45–74, 78–107, 110–144, 148–177, 181–210, and 214–243; these read EKKE…SVDS, YGWT…NASF, DKQS…DPNV, RLMT…EVNT, NGYT…NKML, and DGKM…PLEG. Residues 272 to 334 form the SAM domain; the sequence is SYTAFGDLEV…KILAALKELQ (63 aa).

As to quaternary structure, interacts with DDX4, PIWIL1, RANBP9 and TDRD1.

It is found in the cytoplasm. In terms of biological role, plays a central role during spermatogenesis by repressing transposable elements and preventing their mobilization, which is essential for the germline integrity. Acts via the piRNA metabolic process, which mediates the repression of transposable elements during meiosis by forming complexes composed of piRNAs and Piwi proteins and governs the methylation and subsequent repression of transposons. Its association with pi-bodies suggests a participation in the primary piRNAs metabolic process. Required prior to the pachytene stage to facilitate the production of multiple types of piRNAs, including those associated with repeats involved in the regulation of retrotransposons. May act by mediating protein-protein interactions during germ cell maturation. This Pan troglodytes (Chimpanzee) protein is Ankyrin repeat, SAM and basic leucine zipper domain-containing protein 1 (ASZ1).